Consider the following 897-residue polypeptide: DNA mismatch repair protein MutS (897 aa).

Residue 654–661 (GPNMAGKS) participates in ATP binding.

It belongs to the DNA mismatch repair MutS family.

Its function is as follows. This protein is involved in the repair of mismatches in DNA. It is possible that it carries out the mismatch recognition step. This protein has a weak ATPase activity. This Maricaulis maris (strain MCS10) (Caulobacter maris) protein is DNA mismatch repair protein MutS.